Reading from the N-terminus, the 78-residue chain is Putative gastrointestinal growth factor xP1 (78 aa).

The N-terminal stretch at 1–23 is a signal peptide; sequence MNYKVFCLVAIALIVGSIGSANG. One can recognise a P-type domain in the interval 30–73; the sequence is EQCSVERLARVNCGYSGITPQECTKQGCCFDSTIQDAPWCFYPR. 3 disulfide bridges follow: C32–C58, C42–C57, and C52–C69.

In terms of tissue distribution, stomach mucosa.

Its subcellular location is the secreted. Functionally, may act as a growth factor. This is Putative gastrointestinal growth factor xP1 (p1) from Xenopus laevis (African clawed frog).